Consider the following 231-residue polypeptide: D-allulose-6-phosphate 3-epimerase (231 aa).

A substrate-binding site is contributed by serine 6. Positions 30, 32, and 63 each coordinate a divalent metal cation. Aspartate 32 acts as the Proton acceptor in catalysis. Substrate contacts are provided by residues histidine 63, 140–143 (GFAG), 173–175 (DGS), and 195–197 (GTS). Aspartate 173 lines the a divalent metal cation pocket. Residue aspartate 173 is the Proton donor of the active site.

It belongs to the ribulose-phosphate 3-epimerase family. AlsE subfamily. Homohexamer. Trimer of dimers. It depends on Co(2+) as a cofactor. Mn(2+) serves as cofactor. The cofactor is Zn(2+).

The enzyme catalyses D-allulose 6-phosphate = keto-D-fructose 6-phosphate. The protein operates within carbohydrate degradation; D-allose degradation. In terms of biological role, catalyzes the reversible epimerization of D-allulose 6-phosphate to D-fructose 6-phosphate. Can also catalyze with lower efficiency the reversible epimerization of D-ribulose 5-phosphate to D-xylulose 5-phosphate. The polypeptide is D-allulose-6-phosphate 3-epimerase (Escherichia coli (strain K12)).